The following is a 363-amino-acid chain: Chorismate synthase (363 aa).

Residues R48 and R54 each contribute to the NADP(+) site. Residues 125-127 (RSS), 237-238 (NA), G277, 292-296 (KPTSS), and R318 contribute to the FMN site.

The protein belongs to the chorismate synthase family. As to quaternary structure, homotetramer. The cofactor is FMNH2.

The catalysed reaction is 5-O-(1-carboxyvinyl)-3-phosphoshikimate = chorismate + phosphate. It participates in metabolic intermediate biosynthesis; chorismate biosynthesis; chorismate from D-erythrose 4-phosphate and phosphoenolpyruvate: step 7/7. Functionally, catalyzes the anti-1,4-elimination of the C-3 phosphate and the C-6 proR hydrogen from 5-enolpyruvylshikimate-3-phosphate (EPSP) to yield chorismate, which is the branch point compound that serves as the starting substrate for the three terminal pathways of aromatic amino acid biosynthesis. This reaction introduces a second double bond into the aromatic ring system. This is Chorismate synthase from Pseudomonas syringae pv. syringae (strain B728a).